Reading from the N-terminus, the 376-residue chain is Fibromodulin (376 aa).

The first 18 residues, 1 to 18 (MQWTSLLLLAGLFSLSQA), serve as a signal peptide directing secretion. Gln-19 is modified (pyrrolidone carboxylic acid). Sulfotyrosine is present on residues Tyr-20, Tyr-38, Tyr-39, Tyr-45, Tyr-47, Tyr-53, and Tyr-55. Positions 67–105 (SPSPPDPRDCPQECDCPPNFPTAMYCDNRNLKYLPFVPS) constitute an LRRNT domain. LRR repeat units follow at residues 106–127 (RMKYVYFQNNQITSIQEGVFDN), 130–151 (GLLWIALHGNQITSDKVGRKVF), 156–176 (HLERLYLDHNNLTRMPGPLPR), 177–198 (SLRELHLDHNQISRVPNNALEG), 201–222 (NLTALYLQHNEIQEVGSSMRGL), 224–245 (SLILLDLSYNHLRKVPDGLPSA), 246–266 (LEQLYMEHNNVYTVPDSYFRG), and 269–289 (KLLYVRLSHNSLTNNGLASNT). N-linked (GlcNAc...) (keratan sulfate) asparagine glycosylation is present at Asn-127. Asn-166 carries N-linked (GlcNAc...) (keratan sulfate) asparagine glycosylation. A glycan (N-linked (GlcNAc...) (keratan sulfate) asparagine) is linked at Asn-201. Asn-291 is a glycosylation site (N-linked (GlcNAc...) (keratan sulfate) asparagine). LRR repeat units lie at residues 294-315 (SLLELDLSYNQLQKIPPVNTNL) and 316-335 (ENLYLQGNRINEFSISSFCT). Cysteines 334 and 367 form a disulfide. Asn-341 carries N-linked (GlcNAc...) asparagine glycosylation. Residues 344-365 (KLQVLRLDGNEIKRSAMPADAP) form an LRR 11 repeat.

The protein belongs to the small leucine-rich proteoglycan (SLRP) family. SLRP class II subfamily. In terms of assembly, binds to type I and type II collagen. Binds keratan sulfate chains.

Its subcellular location is the secreted. It localises to the extracellular space. It is found in the extracellular matrix. Its function is as follows. Affects the rate of fibrils formation. May have a primary role in collagen fibrillogenesis. In Homo sapiens (Human), this protein is Fibromodulin (FMOD).